The sequence spans 185 residues: dCTP deaminase, dUMP-forming (185 aa).

DCTP contacts are provided by residues 99 to 104 (KSSIAR), Asp-117, 125 to 127 (TLE), Gln-146, Tyr-159, Lys-166, and Gln-170. Glu-127 functions as the Proton donor/acceptor in the catalytic mechanism.

It belongs to the dCTP deaminase family. As to quaternary structure, homotrimer.

The catalysed reaction is dCTP + 2 H2O = dUMP + NH4(+) + diphosphate. The protein operates within pyrimidine metabolism; dUMP biosynthesis; dUMP from dCTP: step 1/1. Bifunctional enzyme that catalyzes both the deamination of dCTP to dUTP and the hydrolysis of dUTP to dUMP without releasing the toxic dUTP intermediate. The protein is dCTP deaminase, dUMP-forming of Methanospirillum hungatei JF-1 (strain ATCC 27890 / DSM 864 / NBRC 100397 / JF-1).